The chain runs to 308 residues: Aspartate carbamoyltransferase catalytic subunit (308 aa).

R55 and T56 together coordinate carbamoyl phosphate. K83 lines the L-aspartate pocket. Residues R105, H133, and Q136 each coordinate carbamoyl phosphate. 2 residues coordinate L-aspartate: R166 and R220. 2 residues coordinate carbamoyl phosphate: G261 and P262.

Belongs to the aspartate/ornithine carbamoyltransferase superfamily. ATCase family. Heterododecamer (2C3:3R2) of six catalytic PyrB chains organized as two trimers (C3), and six regulatory PyrI chains organized as three dimers (R2).

The catalysed reaction is carbamoyl phosphate + L-aspartate = N-carbamoyl-L-aspartate + phosphate + H(+). It participates in pyrimidine metabolism; UMP biosynthesis via de novo pathway; (S)-dihydroorotate from bicarbonate: step 2/3. Catalyzes the condensation of carbamoyl phosphate and aspartate to form carbamoyl aspartate and inorganic phosphate, the committed step in the de novo pyrimidine nucleotide biosynthesis pathway. The polypeptide is Aspartate carbamoyltransferase catalytic subunit (Chlorobaculum tepidum (strain ATCC 49652 / DSM 12025 / NBRC 103806 / TLS) (Chlorobium tepidum)).